Consider the following 690-residue polypeptide: Elongation factor G (690 aa).

In terms of domain architecture, tr-type G spans E8–L283. GTP contacts are provided by residues A17 to T24, D81 to H85, and N135 to D138.

It belongs to the TRAFAC class translation factor GTPase superfamily. Classic translation factor GTPase family. EF-G/EF-2 subfamily.

The protein localises to the cytoplasm. Its function is as follows. Catalyzes the GTP-dependent ribosomal translocation step during translation elongation. During this step, the ribosome changes from the pre-translocational (PRE) to the post-translocational (POST) state as the newly formed A-site-bound peptidyl-tRNA and P-site-bound deacylated tRNA move to the P and E sites, respectively. Catalyzes the coordinated movement of the two tRNA molecules, the mRNA and conformational changes in the ribosome. The polypeptide is Elongation factor G (Novosphingobium aromaticivorans (strain ATCC 700278 / DSM 12444 / CCUG 56034 / CIP 105152 / NBRC 16084 / F199)).